The chain runs to 172 residues: Peptide deformylase (172 aa).

2 residues coordinate Fe cation: Cys91 and His133. Glu134 is an active-site residue. His137 contacts Fe cation.

It belongs to the polypeptide deformylase family. The cofactor is Fe(2+).

It catalyses the reaction N-terminal N-formyl-L-methionyl-[peptide] + H2O = N-terminal L-methionyl-[peptide] + formate. Its function is as follows. Removes the formyl group from the N-terminal Met of newly synthesized proteins. Requires at least a dipeptide for an efficient rate of reaction. N-terminal L-methionine is a prerequisite for activity but the enzyme has broad specificity at other positions. This chain is Peptide deformylase, found in Vibrio campbellii (strain ATCC BAA-1116).